We begin with the raw amino-acid sequence, 314 residues long: ATP synthase gamma chain (314 aa).

This sequence belongs to the ATPase gamma chain family. In terms of assembly, F-type ATPases have 2 components, CF(1) - the catalytic core - and CF(0) - the membrane proton channel. CF(1) has five subunits: alpha(3), beta(3), gamma(1), delta(1), epsilon(1). CF(0) has three main subunits: a, b and c.

The protein resides in the cell membrane. Produces ATP from ADP in the presence of a proton gradient across the membrane. The gamma chain is believed to be important in regulating ATPase activity and the flow of protons through the CF(0) complex. The chain is ATP synthase gamma chain from Lactiplantibacillus plantarum (strain ATCC BAA-793 / NCIMB 8826 / WCFS1) (Lactobacillus plantarum).